The primary structure comprises 198 residues: Holliday junction resolvase RecU (198 aa).

Residues 1-29 (MIRYPNGKSYQPKTAASSLQKKPSYSNRG) are disordered. The segment covering 8-29 (KSYQPKTAASSLQKKPSYSNRG) has biased composition (polar residues). Mg(2+) is bound by residues Thr-83, Asp-85, Glu-98, and Gln-117.

This sequence belongs to the RecU family. It depends on Mg(2+) as a cofactor.

Its subcellular location is the cytoplasm. The catalysed reaction is Endonucleolytic cleavage at a junction such as a reciprocal single-stranded crossover between two homologous DNA duplexes (Holliday junction).. Endonuclease that resolves Holliday junction intermediates in genetic recombination. Cleaves mobile four-strand junctions by introducing symmetrical nicks in paired strands. Promotes annealing of linear ssDNA with homologous dsDNA. Required for DNA repair, homologous recombination and chromosome segregation. This Bacillus licheniformis (strain ATCC 14580 / DSM 13 / JCM 2505 / CCUG 7422 / NBRC 12200 / NCIMB 9375 / NCTC 10341 / NRRL NRS-1264 / Gibson 46) protein is Holliday junction resolvase RecU.